Reading from the N-terminus, the 393-residue chain is uncharacterized protein (393 aa).

Cysteine 9, cysteine 15, cysteine 18, and cysteine 97 together coordinate [4Fe-4S] cluster. The S-adenosyl-L-methionine site is built by glutamine 231, tyrosine 258, glutamate 279, and aspartate 325. The active-site Nucleophile is cysteine 352.

Belongs to the class I-like SAM-binding methyltransferase superfamily. RNA M5U methyltransferase family.

This is an uncharacterized protein from Leptospira interrogans serogroup Icterohaemorrhagiae serovar Lai (strain 56601).